Consider the following 215-residue polypeptide: MPAFNRLLPLASLVLIYWVRVCFPVCVEVPSETEAVQGNPMKLRCISCMKREEVEATTVVEWFYRPEGGKDFLIYEYRNGHQEVESPFQGRLQWNGSKDLQDVSITVLNVTLNDSGLYTCNVSREFEFEAHRPFVKTTRLIPLRVTEEAGEDFTSVVSEIMMYILLVFLTLWLFIEMIYCYRKVSKAEEAAQENASDYLAIPSENKENSVVPVEE.

Residues 1-24 (MPAFNRLLPLASLVLIYWVRVCFP) form the signal peptide. An Ig-like C2-type domain is found at 25–138 (VCVEVPSETE…EAHRPFVKTT (114 aa)). Residues 25–156 (VCVEVPSETE…EEAGEDFTSV (132 aa)) are Extracellular-facing. 2 disulfides stabilise this stretch: cysteine 26–cysteine 48 and cysteine 45–cysteine 120. Residues asparagine 95, asparagine 109, asparagine 113, and asparagine 121 are each glycosylated (N-linked (GlcNAc...) asparagine). Residues 157-178 (VSEIMMYILLVFLTLWLFIEMI) traverse the membrane as a helical segment. Topologically, residues 179–215 (YCYRKVSKAEEAAQENASDYLAIPSENKENSVVPVEE) are cytoplasmic.

It belongs to the sodium channel auxiliary subunit SCN3B (TC 8.A.17) family. In terms of assembly, a voltage-gated sodium (Nav) channel consists of an ion-conducting pore-forming alpha subunit functional on its own that is regulated by one or more beta subunits. Forms homodimers and homotrimers. SCN3B is non-covalently associated with alpha subunits and induces the formation of alpha subunit oligomers, including trimers. Interacts with SCN5A/Nav1.5; regulatory subunit of SCN5A/Nav1.5. Interacts with SCN7A/Nav2.1; probable regulatory subunit of SCN7A/Nav2.1. Interacts with SCN10A; regulatory subunit of SCN10A/Nav1.8. Interacts with NFASC; probably involved in targeting the sodium channels to the nodes of Ranvier. Post-translationally, intramolecular disulfide bonds favor the voltage-gated sodium channel oligomeric complex assembly. N-glycosylated. In terms of tissue distribution, expressed broadly in neurons in the central and peripheral nervous systems, but not in glia and most non-neuronal cells. Weak detection in lung and adrenal gland.

It is found in the cell membrane. In terms of biological role, regulatory subunit of multiple voltage-gated sodium (Nav) channels directly mediating the depolarization of excitable membranes. Navs, also called VGSCs (voltage-gated sodium channels) or VDSCs (voltage-dependent sodium channels), operate by switching between closed and open conformations depending on the voltage difference across the membrane. In the open conformation they allow Na(+) ions to selectively pass through the pore, along their electrochemical gradient. The influx of Na+ ions provokes membrane depolarization, initiating the propagation of electrical signals throughout cells and tissues. The accessory beta subunits participate in localization and functional modulation of the Nav channels. Voltage-gated sodium channels regulatory subunit that modulates channel gating kinetics. Modulates the activity of SCN2A/Nav1.2, causing a hyperpolarizing shift in the voltage-dependence of inactivation and increasing the fraction of channels operating in the fast gating mode. Also able to induce unique persistent SCN2A/Nav1.2-mediated sodium currents. Could modulate the activity of SCN10A/Nav1.8. This chain is Sodium channel regulatory subunit beta-3, found in Rattus norvegicus (Rat).